We begin with the raw amino-acid sequence, 454 residues long: UDP-N-acetylmuramate--L-alanine ligase (454 aa).

113 to 119 contacts ATP; the sequence is GSHGKTT.

This sequence belongs to the MurCDEF family.

It localises to the cytoplasm. The catalysed reaction is UDP-N-acetyl-alpha-D-muramate + L-alanine + ATP = UDP-N-acetyl-alpha-D-muramoyl-L-alanine + ADP + phosphate + H(+). It functions in the pathway cell wall biogenesis; peptidoglycan biosynthesis. In terms of biological role, cell wall formation. The sequence is that of UDP-N-acetylmuramate--L-alanine ligase from Aquifex aeolicus (strain VF5).